We begin with the raw amino-acid sequence, 103 residues long: Urease subunit beta (103 aa).

It belongs to the urease beta subunit family. In terms of assembly, heterotrimer of UreA (gamma), UreB (beta) and UreC (alpha) subunits. Three heterotrimers associate to form the active enzyme.

The protein localises to the cytoplasm. It carries out the reaction urea + 2 H2O + H(+) = hydrogencarbonate + 2 NH4(+). Its pathway is nitrogen metabolism; urea degradation; CO(2) and NH(3) from urea (urease route): step 1/1. Ureolysis may allow urea to be employed as a nitrogen source for growth and produces ammonia which may protect from killing at low pH. In Streptococcus salivarius (strain 57.I), this protein is Urease subunit beta.